The following is a 222-amino-acid chain: MSKLGISSLFKTILLTAALAVSFTASAFTEGTDYMVLEKPIPNADKTLIKVFSYACPFCYKYDKAVTGPVSEKVKDIVAFTPFHLETKGEYGKQASEVFAVLINKDKAAGISLFDANSQFKKAKFAYYAAYHDKKERWSDGKDPAAFIKTGLDAAGMSQADFEAALKEPAVQETLEKWKASYDVAKIQGVPAYVVNGKYLIYTKSIKSIDAMADLIRELASK.

The first 27 residues, 1 to 27, serve as a signal peptide directing secretion; it reads MSKLGISSLFKTILLTAALAVSFTASA. Residues 28–221 form the Thioredoxin domain; that stretch reads FTEGTDYMVL…MADLIRELAS (194 aa). The cysteines at positions 56 and 59 are disulfide-linked.

Belongs to the thioredoxin family. DsbL subfamily. In terms of assembly, interacts with DsbI.

Its subcellular location is the periplasm. Involved in disulfide-bond formation. Acts by transferring its disulfide bond to other proteins. Part of a redox system composed of DsbI and DsbL that mediates formation of an essential disulfide bond in AssT. This is Thiol:disulfide interchange protein DsbL from Escherichia coli O6:H1 (strain CFT073 / ATCC 700928 / UPEC).